Here is a 182-residue protein sequence, read N- to C-terminus: ADP-ribosylation factor 1 (182 aa).

Gly-2 is lipidated: N-myristoyl glycine. GTP contacts are provided by residues 24 to 31 (GLDNAGKT), 67 to 71 (DLGGQ), and 126 to 129 (NKQD).

The protein belongs to the small GTPase superfamily. Arf family.

It localises to the golgi apparatus. It catalyses the reaction GTP + H2O = GDP + phosphate + H(+). Functionally, GTP-binding protein involved in protein trafficking; may modulate vesicle budding and uncoating within the Golgi apparatus. The chain is ADP-ribosylation factor 1 (ARF1) from Brassica rapa subsp. pekinensis (Chinese cabbage).